Consider the following 584-residue polypeptide: ATP-dependent lipid A-core flippase (584 aa).

5 consecutive transmembrane segments (helical) span residues 15–35 (LLGY…SMAV), 63–83 (IMWV…AGFI), 153–173 (LGML…CLVV), 251–271 (TGVT…FAGL), and 277–297 (GLTA…FAPV). Residues 27-309 (LLSMLSMAVA…ISSVSQAMQR (283 aa)) form the ABC transmembrane type-1 domain. The 236-residue stretch at 341–576 (LSFDAVSFAY…GGLYARLHSL (236 aa)) folds into the ABC transporter domain. 375–382 (GSSGSGKT) serves as a coordination point for ATP.

Belongs to the ABC transporter superfamily. Lipid exporter (TC 3.A.1.106) family. In terms of assembly, homodimer.

It is found in the cell inner membrane. It catalyses the reaction ATP + H2O + lipid A-core oligosaccharideSide 1 = ADP + phosphate + lipid A-core oligosaccharideSide 2.. Functionally, involved in lipopolysaccharide (LPS) biosynthesis. Translocates lipid A-core from the inner to the outer leaflet of the inner membrane. Transmembrane domains (TMD) form a pore in the inner membrane and the ATP-binding domain (NBD) is responsible for energy generation. This chain is ATP-dependent lipid A-core flippase, found in Chromobacterium violaceum (strain ATCC 12472 / DSM 30191 / JCM 1249 / CCUG 213 / NBRC 12614 / NCIMB 9131 / NCTC 9757 / MK).